We begin with the raw amino-acid sequence, 355 residues long: Spore germination protein XB (355 aa).

The next 10 helical transmembrane spans lie at 2 to 24 (VNFF…VIII), 34 to 56 (DSWI…VFIV), 69 to 91 (LMRN…YLII), 106 to 128 (FYLP…FYNI), 135 to 157 (IALT…MIAN), 180 to 197 (GMIY…ILFL), 210 to 232 (LIIV…IVEF), 265 to 287 (VYQW…PDVL), 299 to 321 (ISIL…SFYW), and 326 to 348 (VFLP…FVWV).

This sequence belongs to the amino acid-polyamine-organocation (APC) superfamily. Spore germination protein (SGP) (TC 2.A.3.9) family.

It is found in the cell membrane. In terms of biological role, may allow B.anthracis to germinate within phagocytic cells and therefore involved in virulence. This Bacillus anthracis protein is Spore germination protein XB (gerXB).